The sequence spans 575 residues: Isocitrate dehydrogenase kinase/phosphatase (575 aa).

Residues 315–321 and K336 contribute to the ATP site; that span reads APGVKGM. Residue D371 is part of the active site.

The protein belongs to the AceK family.

It is found in the cytoplasm. It catalyses the reaction L-seryl-[isocitrate dehydrogenase] + ATP = O-phospho-L-seryl-[isocitrate dehydrogenase] + ADP + H(+). Bifunctional enzyme which can phosphorylate or dephosphorylate isocitrate dehydrogenase (IDH) on a specific serine residue. This is a regulatory mechanism which enables bacteria to bypass the Krebs cycle via the glyoxylate shunt in response to the source of carbon. When bacteria are grown on glucose, IDH is fully active and unphosphorylated, but when grown on acetate or ethanol, the activity of IDH declines drastically concomitant with its phosphorylation. The polypeptide is Isocitrate dehydrogenase kinase/phosphatase (Yersinia pseudotuberculosis serotype O:1b (strain IP 31758)).